A 232-amino-acid polypeptide reads, in one-letter code: Chaperone protein CssC (232 aa).

Residues 1-20 (MKSKLIILLMLVPFSSFSTE) form the signal peptide.

This sequence belongs to the periplasmic pilus chaperone family.

The protein resides in the periplasm. Its function is as follows. Involved in the biogenesis of the CS6 fimbria. This is Chaperone protein CssC (cssC) from Escherichia coli.